The sequence spans 335 residues: MKRIAVLTSGGDAPGMNAAIRAVVRQAISEGMEVFGIYDGYAGMVAGEIHPLDAASVGDIISRGGTFLHSARYPEFAQLEGQLKGIEQLKKHGIEGVVVIGGDGSYHGAMRLTEHGFPAIGLPGTIDNDIVGTDFTIGFDTAVTTAMDAIDKIRDTSSSHRRTFVIEVMGRNAGDIALWAGIATGADEIIIPEAGFKMEDIVASIKAGYECGKKHNIIVLAEGVMSAAEFGQKLKEAGDTSDLRVTELGHIQRGGSPTARDRVLASRMGTHAVKLLKEGIGGVAVGIRNEKMVENPILGTAEEGALFSLTAEGKIVVNNPHKADIELSSLNKSLS.

G11 serves as a coordination point for ATP. Residue 21-25 (RAVVR) coordinates ADP. ATP-binding positions include 72–73 (RY) and 102–105 (GDGS). Residue D103 coordinates Mg(2+). 125 to 127 (TID) lines the substrate pocket. The active-site Proton acceptor is D127. R154 is a binding site for ADP. Residues R162 and 169-171 (MGR) contribute to the substrate site. ADP-binding positions include 185-187 (GAD) and 213-215 (KKH). Residues E222, R244, and 250–253 (HIQR) contribute to the substrate site.

Belongs to the phosphofructokinase type A (PFKA) family. ATP-dependent PFK group I subfamily. Prokaryotic clade 'B1' sub-subfamily. In terms of assembly, homotetramer. The cofactor is Mg(2+).

The protein resides in the cytoplasm. It carries out the reaction beta-D-fructose 6-phosphate + ATP = beta-D-fructose 1,6-bisphosphate + ADP + H(+). It participates in carbohydrate degradation; glycolysis; D-glyceraldehyde 3-phosphate and glycerone phosphate from D-glucose: step 3/4. Allosterically activated by ADP and other diphosphonucleosides, and allosterically inhibited by phosphoenolpyruvate. Catalyzes the phosphorylation of D-fructose 6-phosphate to fructose 1,6-bisphosphate by ATP, the first committing step of glycolysis. The chain is ATP-dependent 6-phosphofructokinase from Streptococcus pneumoniae (strain CGSP14).